We begin with the raw amino-acid sequence, 1224 residues long: Protein MSN5 (1224 aa).

The segment at 1200 to 1224 (NKENGDMLDDPNIEDGAVGNLFDDN) is disordered.

As to quaternary structure, interacts with CEX1.

This is Protein MSN5 (MSN5) from Saccharomyces cerevisiae (strain ATCC 204508 / S288c) (Baker's yeast).